A 121-amino-acid polypeptide reads, in one-letter code: Putative ferredoxin (121 aa).

This sequence to E.coli YkgJ.

The protein is Putative ferredoxin of Acinetobacter calcoaceticus.